Here is a 233-residue protein sequence, read N- to C-terminus: Large ribosomal subunit protein uL2 (233 aa).

The tract at residues 194–233 (HPHGGGNHQHVGRPSTVGRGTPPGRKVGRLSPKRRKKYGR) is disordered. Over residues 219-233 (KVGRLSPKRRKKYGR) the composition is skewed to basic residues.

This sequence belongs to the universal ribosomal protein uL2 family. Part of the 50S ribosomal subunit. Forms a bridge to the 30S subunit in the 70S ribosome.

Functionally, one of the primary rRNA binding proteins. Required for association of the 30S and 50S subunits to form the 70S ribosome, for tRNA binding and peptide bond formation. It has been suggested to have peptidyltransferase activity; this is somewhat controversial. Makes several contacts with the 16S rRNA in the 70S ribosome. The chain is Large ribosomal subunit protein uL2 from Picrophilus torridus (strain ATCC 700027 / DSM 9790 / JCM 10055 / NBRC 100828 / KAW 2/3).